The primary structure comprises 247 residues: MQALLFLMALLLPSGAGAEEIIGGVESIPHSRPYMAHLDIVTEKGLRVICGGFLISRQFVLTAAHCKGREITVILGAHDVRKRESTQQKIKVEKQIIHESYNSVPNLHDIMLLKLEKKVELTPAVNVVPLPSPSDFIHPGAMCWAAGWGKTGVRDPTSYTLREVELRIMDEKACVDYRYYEYKFQVCVGSPTTLRAAFMGDSGGPLLCAGVAHGIVSYGHPDAKPPAIFTRVSTYVPWINAVINTSS.

Positions 1–18 are cleaved as a signal peptide; sequence MQALLFLMALLLPSGAGA. Positions 19–20 are cleaved as a propeptide — activation peptide; it reads EE. In terms of domain architecture, Peptidase S1 spans 21–244; that stretch reads IIGGVESIPH…YVPWINAVIN (224 aa). Cys50 and Cys66 form a disulfide bridge. Residues His65 and Asp109 each act as charge relay system in the active site. 2 disulfide bridges follow: Cys143–Cys208 and Cys174–Cys187. Ser202 functions as the Charge relay system in the catalytic mechanism.

Belongs to the peptidase S1 family. Granzyme subfamily.

Functionally, this enzyme, isolated from small intestine, specifically inactivates the apo forms of a certain group of intracellular pyridoxal phosphate-requiring enzymes. It has chymotrypsin-like specificity towards small substrates. This is Mast cell protease 2 (Mcpt2) from Rattus norvegicus (Rat).